Reading from the N-terminus, the 506-residue chain is ATP synthase subunit alpha (506 aa).

171 to 178 (GDRQTGKT) contacts ATP.

This sequence belongs to the ATPase alpha/beta chains family. F-type ATPases have 2 components, CF(1) - the catalytic core - and CF(0) - the membrane proton channel. CF(1) has five subunits: alpha(3), beta(3), gamma(1), delta(1), epsilon(1). CF(0) has four main subunits: a(1), b(1), b'(1) and c(9-12).

It is found in the cellular thylakoid membrane. It catalyses the reaction ATP + H2O + 4 H(+)(in) = ADP + phosphate + 5 H(+)(out). In terms of biological role, produces ATP from ADP in the presence of a proton gradient across the membrane. The alpha chain is a regulatory subunit. In Nostoc sp. (strain PCC 7120 / SAG 25.82 / UTEX 2576), this protein is ATP synthase subunit alpha.